Here is a 185-residue protein sequence, read N- to C-terminus: Small ribosomal subunit protein uS7 (185 aa).

It belongs to the universal ribosomal protein uS7 family. In terms of assembly, part of the 30S ribosomal subunit.

Its function is as follows. One of the primary rRNA binding proteins, it binds directly to 16S rRNA where it nucleates assembly of the head domain of the 30S subunit. Is located at the subunit interface close to the decoding center. This Methanothrix thermoacetophila (strain DSM 6194 / JCM 14653 / NBRC 101360 / PT) (Methanosaeta thermophila) protein is Small ribosomal subunit protein uS7.